The primary structure comprises 484 residues: ETS translocation variant 4 (484 aa).

K6 is covalently cross-linked (Glycyl lysine isopeptide (Lys-Gly) (interchain with G-Cter in SUMO2)). A disordered region spans residues 90–115 (SPTTRIKKEPQSPRTDPALSCSRKPP). K96 is covalently cross-linked (Glycyl lysine isopeptide (Lys-Gly) (interchain with G-Cter in SUMO)). A Phosphoserine modification is found at S101. Residue K139 forms a Glycyl lysine isopeptide (Lys-Gly) (interchain with G-Cter in SUMO2) linkage. Phosphoserine occurs at positions 140, 149, and 214. Glycyl lysine isopeptide (Lys-Gly) (interchain with G-Cter in SUMO) cross-links involve residues K226 and K260. Residue K322 forms a Glycyl lysine isopeptide (Lys-Gly) (interchain with G-Cter in SUMO2) linkage. A DNA-binding region (ETS) is located at residues 341–421 (LQLWQFLVAL…AGERYVYKFV (81 aa)).

The protein belongs to the ETS family. In terms of processing, sumoylated; enhanced upon ERK/MAP kinase pathway activation, it positively regulates the transcriptional activator capacity. Sumoylation at Lys-96 probably requires phosphorylation at Ser-101. Transiently polysumoylated and desumoylated by SENP1. Sumoylation is a prerequisite to polyubiquitination which in turn increases proteasomal-mediated degradation. Probably polyubiquitinated by RNF4 and deubiquitinated by USP2. In terms of tissue distribution, expressed in keratinocytes.

The protein localises to the nucleus. Functionally, transcriptional activator. May play a role in keratinocyte differentiation. Its function is as follows. (Microbial infection) Binds to the enhancer of the adenovirus E1A gene and acts as a transcriptional activator; the core-binding sequence is 5'-[AC]GGA[AT]GT-3'. In Homo sapiens (Human), this protein is ETS translocation variant 4 (ETV4).